We begin with the raw amino-acid sequence, 154 residues long: Myoglobin (154 aa).

Residues 2-148 (GLSEGEWQLV…FRKDIATKYK (147 aa)) form the Globin domain. The residue at position 4 (Ser4) is a Phosphoserine. His65 serves as a coordination point for nitrite. His65 contributes to the O2 binding site. Thr68 is subject to Phosphothreonine. Residue His94 participates in heme b binding.

This sequence belongs to the globin family. As to quaternary structure, monomeric.

It localises to the cytoplasm. The protein resides in the sarcoplasm. The enzyme catalyses Fe(III)-heme b-[protein] + nitric oxide + H2O = Fe(II)-heme b-[protein] + nitrite + 2 H(+). It catalyses the reaction H2O2 + AH2 = A + 2 H2O. Functionally, monomeric heme protein which primary function is to store oxygen and facilitate its diffusion within muscle tissues. Reversibly binds oxygen through a pentacoordinated heme iron and enables its timely and efficient release as needed during periods of heightened demand. Depending on the oxidative conditions of tissues and cells, and in addition to its ability to bind oxygen, it also has a nitrite reductase activity whereby it regulates the production of bioactive nitric oxide. Under stress conditions, like hypoxia and anoxia, it also protects cells against reactive oxygen species thanks to its pseudoperoxidase activity. The protein is Myoglobin (MB) of Phocoenoides dalli dalli (Dall's porpoise).